A 132-amino-acid polypeptide reads, in one-letter code: Phosphoribosyl-AMP cyclohydrolase (132 aa).

Residue aspartate 79 coordinates Mg(2+). Cysteine 80 contributes to the Zn(2+) binding site. Mg(2+) contacts are provided by aspartate 81 and aspartate 83. The Zn(2+) site is built by cysteine 100 and cysteine 107.

It belongs to the PRA-CH family. Homodimer. Mg(2+) serves as cofactor. Requires Zn(2+) as cofactor.

The protein localises to the cytoplasm. It catalyses the reaction 1-(5-phospho-beta-D-ribosyl)-5'-AMP + H2O = 1-(5-phospho-beta-D-ribosyl)-5-[(5-phospho-beta-D-ribosylamino)methylideneamino]imidazole-4-carboxamide. Its pathway is amino-acid biosynthesis; L-histidine biosynthesis; L-histidine from 5-phospho-alpha-D-ribose 1-diphosphate: step 3/9. Catalyzes the hydrolysis of the adenine ring of phosphoribosyl-AMP. The sequence is that of Phosphoribosyl-AMP cyclohydrolase from Acidovorax sp. (strain JS42).